A 303-amino-acid chain; its full sequence is tRNA dimethylallyltransferase (303 aa).

Residue 10-17 (GPTASGKS) coordinates ATP. 12 to 17 (TASGKS) serves as a coordination point for substrate. The interval 35 to 38 (DSMQ) is interaction with substrate tRNA.

The protein belongs to the IPP transferase family. As to quaternary structure, monomer. It depends on Mg(2+) as a cofactor.

It catalyses the reaction adenosine(37) in tRNA + dimethylallyl diphosphate = N(6)-dimethylallyladenosine(37) in tRNA + diphosphate. Catalyzes the transfer of a dimethylallyl group onto the adenine at position 37 in tRNAs that read codons beginning with uridine, leading to the formation of N6-(dimethylallyl)adenosine (i(6)A). The sequence is that of tRNA dimethylallyltransferase from Methylobacterium nodulans (strain LMG 21967 / CNCM I-2342 / ORS 2060).